We begin with the raw amino-acid sequence, 135 residues long: Large ribosomal subunit protein uL22 (135 aa).

Belongs to the universal ribosomal protein uL22 family. As to quaternary structure, part of the 50S ribosomal subunit.

Its function is as follows. This protein binds specifically to 23S rRNA; its binding is stimulated by other ribosomal proteins, e.g. L4, L17, and L20. It is important during the early stages of 50S assembly. It makes multiple contacts with different domains of the 23S rRNA in the assembled 50S subunit and ribosome. In terms of biological role, the globular domain of the protein is located near the polypeptide exit tunnel on the outside of the subunit, while an extended beta-hairpin is found that lines the wall of the exit tunnel in the center of the 70S ribosome. This chain is Large ribosomal subunit protein uL22, found in Malacoplasma penetrans (strain HF-2) (Mycoplasma penetrans).